The chain runs to 190 residues: Ribosome maturation factor RimM (190 aa).

Residues 114 to 190 (DDEYYWVDLI…CITVDWQPDY (77 aa)) form the PRC barrel domain.

The protein belongs to the RimM family. Binds ribosomal protein uS19.

It is found in the cytoplasm. An accessory protein needed during the final step in the assembly of 30S ribosomal subunit, possibly for assembly of the head region. Essential for efficient processing of 16S rRNA. May be needed both before and after RbfA during the maturation of 16S rRNA. It has affinity for free ribosomal 30S subunits but not for 70S ribosomes. This Acidovorax sp. (strain JS42) protein is Ribosome maturation factor RimM.